Consider the following 151-residue polypeptide: Large-conductance mechanosensitive channel (151 aa).

2 helical membrane-spanning segments follow: residues 12 to 32 (GNIV…ALVT) and 71 to 91 (VLLS…FLVV). Residues 125-151 (NSNSSGRHEAPGTAGTPPPNYGPRADT) form a disordered region.

It belongs to the MscL family. As to quaternary structure, homopentamer.

Its subcellular location is the cell membrane. In terms of biological role, channel that opens in response to stretch forces in the membrane lipid bilayer. May participate in the regulation of osmotic pressure changes within the cell. This Mycobacterium ulcerans (strain Agy99) protein is Large-conductance mechanosensitive channel.